The sequence spans 281 residues: Radiation response metalloprotease IrrE (281 aa).

His82 provides a ligand contact to Zn(2+). Residue Glu83 is part of the active site. Positions 86 and 113 each coordinate Zn(2+). The tract at residues 262 to 281 is disordered; that stretch reads LPAGRSEPDADKPEAPGDQS. A compositionally biased stretch (basic and acidic residues) spans 267–281; it reads SEPDADKPEAPGDQS.

Interacts with DdrOC.

With respect to regulation, protease activity is inhibited by EDTA. In terms of biological role, plays a central regulatory role in DNA repair and protection pathways in response to radiation stress. Acts as a site-specific metalloprotease that cleaves and inactivates the repressor proteins DdrOC and DdrOP3, resulting in induced expression of genes required for DNA repair and cell survival after exposure to radiation. This is Radiation response metalloprotease IrrE from Deinococcus deserti (strain DSM 17065 / CIP 109153 / LMG 22923 / VCD115).